A 154-amino-acid chain; its full sequence is Iron-sulfur cluster assembly 2 homolog, mitochondrial (154 aa).

The N-terminal 8 residues, 1 to 8 (MAAARGLS), are a transit peptide targeting the mitochondrion. Residues Cys79, Cys144, and Cys146 each coordinate Fe cation.

The protein belongs to the HesB/IscA family. In terms of assembly, heterotetramer; forms a dimer of dimers with IBA57. Interacts with [2Fe-2S]-ISCA2 forming the heterodimer [2Fe- 2S]-ISCA2-IBA57 complex; [2Fe-2S] cluster binding is absolutely required to promote the complex formation.

The protein localises to the mitochondrion. In terms of biological role, involved in the maturation of mitochondrial 4Fe-4S proteins functioning late in the iron-sulfur cluster assembly pathway. May be involved in the binding of an intermediate of Fe/S cluster assembly. This chain is Iron-sulfur cluster assembly 2 homolog, mitochondrial (ISCA2), found in Pongo abelii (Sumatran orangutan).